The chain runs to 219 residues: 2,3-bisphosphoglycerate-dependent phosphoglycerate mutase 2 (219 aa).

Residues 8 to 15 (RHGQSIWN), 21 to 22 (TG), arginine 58, 85 to 88 (ERHY), lysine 96, 112 to 113 (RR), and 156 to 157 (GN) contribute to the substrate site. Residue histidine 9 is the Tele-phosphohistidine intermediate of the active site. The active-site Proton donor/acceptor is glutamate 85.

The protein belongs to the phosphoglycerate mutase family. BPG-dependent PGAM subfamily.

It carries out the reaction (2R)-2-phosphoglycerate = (2R)-3-phosphoglycerate. It functions in the pathway carbohydrate degradation; glycolysis; pyruvate from D-glyceraldehyde 3-phosphate: step 3/5. In terms of biological role, catalyzes the interconversion of 2-phosphoglycerate and 3-phosphoglycerate. This Gloeobacter violaceus (strain ATCC 29082 / PCC 7421) protein is 2,3-bisphosphoglycerate-dependent phosphoglycerate mutase 2.